Here is a 129-residue protein sequence, read N- to C-terminus: Phosphoribosyl-AMP cyclohydrolase (129 aa).

Asp-76 contacts Mg(2+). Cys-77 is a binding site for Zn(2+). 2 residues coordinate Mg(2+): Asp-78 and Asp-80. Zn(2+)-binding residues include Cys-97 and Cys-104.

This sequence belongs to the PRA-CH family. Homodimer. Mg(2+) is required as a cofactor. The cofactor is Zn(2+).

It is found in the cytoplasm. It carries out the reaction 1-(5-phospho-beta-D-ribosyl)-5'-AMP + H2O = 1-(5-phospho-beta-D-ribosyl)-5-[(5-phospho-beta-D-ribosylamino)methylideneamino]imidazole-4-carboxamide. It participates in amino-acid biosynthesis; L-histidine biosynthesis; L-histidine from 5-phospho-alpha-D-ribose 1-diphosphate: step 3/9. Catalyzes the hydrolysis of the adenine ring of phosphoribosyl-AMP. The sequence is that of Phosphoribosyl-AMP cyclohydrolase from Verminephrobacter eiseniae (strain EF01-2).